Consider the following 508-residue polypeptide: Lysine--tRNA ligase (508 aa).

Glu-418 and Glu-425 together coordinate Mg(2+).

Belongs to the class-II aminoacyl-tRNA synthetase family. As to quaternary structure, homodimer. Mg(2+) serves as cofactor.

It localises to the cytoplasm. It catalyses the reaction tRNA(Lys) + L-lysine + ATP = L-lysyl-tRNA(Lys) + AMP + diphosphate. In Burkholderia ambifaria (strain MC40-6), this protein is Lysine--tRNA ligase.